We begin with the raw amino-acid sequence, 395 residues long: Transcriptional coactivator yorkie (395 aa).

Residues 73 to 100 (NSFFTPPAPSHSRANSADSTYDAGSQSS) are disordered. Residues serine 82, serine 88, serine 100, serine 117, and serine 145 each carry the phosphoserine modification. Over residues 84 to 100 (SRANSADSTYDAGSQSS) the composition is skewed to polar residues. Disordered regions lie at residues 129–150 (PSPQ…PASL) and 162–199 (AAAA…PASS). Serine 146 is modified (phosphoserine; by CDK7). Serine 149 is subject to Phosphoserine. A compositionally biased stretch (low complexity) spans 162 to 179 (AAAANNPNANPSSQQQPA). Position 227 is a phosphoserine (serine 227). Tyrosine 228 carries the phosphotyrosine modification. Residue serine 232 is modified to Phosphoserine. WW domains lie at 241–274 (GALP…DPRI) and 310–343 (GPLP…DPRM).

It belongs to the YAP1 family. As to quaternary structure, interacts (via WW domains) with wts. Interacts (via N-terminus) with sd (via C-terminus) and this interaction enhances the transcriptional activity of sd. The phosphorylated form interacts with 14-3-3epsilon and 14-3-3zeta. Interacts with Ack and ex. In terms of processing, its activity is regulated by multiple phosphorylation events. Phosphorylation at Ser-88, Ser-145 and Ser-227 negatively regulate its activity and restrict its nuclear localization. Wts-mediated phosphorylation at Ser-145 promotes interaction with 14-3-3epsilon and 14-3-3zeta. Phosphorylation at Ser-88 and Ser-227 regulate nuclear localization and activity independent of 14-3-3 association. Phosphorylation at Ser-146 by Cdk7 promotes its stability by preventing ubiquitination by the DCX(DCAF12) complex. Ubiquitinated by the DCX(DCAF12) complex, leading to its degradation. Phosphorylation at Ser-146 by Cdk7 prevents ubiquitination by the DCX(DCAF12) complex.

Its subcellular location is the cytoplasm. It localises to the nucleus. In terms of biological role, transcriptional coactivator which is the critical downstream regulatory target in the Hippo/SWH (Sav/Wts/Hpo) signaling pathway that plays a pivotal role in organ size control and tumor suppression by restricting proliferation and promoting apoptosis. The core of this pathway is composed of a kinase cascade wherein Hippo (Hpo), in complex with its regulatory protein Salvador (Sav), phosphorylates and activates Warts (Wts) in complex with its regulatory protein Mats, which in turn phosphorylates and inactivates the Yorkie (Yki) oncoprotein. The Hippo/SWH signaling pathway inhibits the activity of the transcriptional complex formed by Scalloped (sd) and Yki and the target genes of this pathway include cyclin-E (cycE), diap1 and bantam. Regulates the expression of G1/S-specific CycE and diap1, thereby promoting cell proliferation and inhibiting apoptosis. Required for transcriptional activity of sd in wing imaginal disks. Induces expression of expression of vestigial (vg) in wing and haltere disks and the expression of transcription factor E2f (E2f). This Drosophila melanogaster (Fruit fly) protein is Transcriptional coactivator yorkie (yki).